A 293-amino-acid polypeptide reads, in one-letter code: MPEGKIIKALSGFYYVQHEEGVTQCRGRGVFRKNKITPLVGDQVVFQADNPTEGYVLEVFDRKNELVRPPIANVDQAILVFSAVEPDFNPGLLDRFLVLIEYHNIKPIICISKMDLVDEKMKATVEAYANDYREMGYDVLFTSINTSESIDILKPYLENCVSVVAGQSGVGKSSMLNVLRPELELKTNDISSHLGRGKHTTRHVELIAIGSGLVADTPGFSSLDFIDIEVEDLTYCFPELKEASQYCKFRGCTHLSEPKCAVKAAVEEGKITEYRYKNYKQFVEEIRERKPRY.

Residues 63–223 (KNELVRPPIA…VADTPGFSSL (161 aa)) form the CP-type G domain. Residues 112 to 115 (SKMD) and 166 to 174 (GQSGVGKSS) each bind GTP. Zn(2+)-binding residues include C247, C252, H254, and C260.

This sequence belongs to the TRAFAC class YlqF/YawG GTPase family. RsgA subfamily. In terms of assembly, monomer. Associates with 30S ribosomal subunit, binds 16S rRNA. Zn(2+) is required as a cofactor.

It localises to the cytoplasm. Functionally, one of several proteins that assist in the late maturation steps of the functional core of the 30S ribosomal subunit. Helps release RbfA from mature subunits. May play a role in the assembly of ribosomal proteins into the subunit. Circularly permuted GTPase that catalyzes slow GTP hydrolysis, GTPase activity is stimulated by the 30S ribosomal subunit. The sequence is that of Small ribosomal subunit biogenesis GTPase RsgA from Bacillus cereus (strain ATCC 14579 / DSM 31 / CCUG 7414 / JCM 2152 / NBRC 15305 / NCIMB 9373 / NCTC 2599 / NRRL B-3711).